The sequence spans 332 residues: Serpentine receptor class gamma-3 (332 aa).

The next 7 helical transmembrane spans lie at 23 to 43 (FAYL…IWVS), 72 to 92 (LIFT…SEIV), 101 to 121 (IYYC…IFIA), 144 to 164 (IMLI…LISD), 184 to 204 (WASL…ITMV), 231 to 251 (AALI…FAFF), and 263 to 283 (YLRF…LLLV).

It belongs to the nematode receptor-like protein srg family.

It is found in the membrane. The protein is Serpentine receptor class gamma-3 (srg-3) of Caenorhabditis elegans.